The sequence spans 242 residues: Triosephosphate isomerase (242 aa).

8–10 (NWK) provides a ligand contact to substrate. H98 acts as the Electrophile in catalysis. The active-site Proton acceptor is the E167. Substrate is bound by residues G173, S205, and 226-227 (GG).

It belongs to the triosephosphate isomerase family. In terms of assembly, homodimer.

The protein localises to the cytoplasm. The catalysed reaction is D-glyceraldehyde 3-phosphate = dihydroxyacetone phosphate. It functions in the pathway carbohydrate biosynthesis; gluconeogenesis. Its pathway is carbohydrate degradation; glycolysis; D-glyceraldehyde 3-phosphate from glycerone phosphate: step 1/1. Its function is as follows. Involved in the gluconeogenesis. Catalyzes stereospecifically the conversion of dihydroxyacetone phosphate (DHAP) to D-glyceraldehyde-3-phosphate (G3P). This is Triosephosphate isomerase from Mesomycoplasma hyopneumoniae (strain 7448) (Mycoplasma hyopneumoniae).